Reading from the N-terminus, the 651-residue chain is Endoplasmic reticulum chaperone BiP (651 aa).

The N-terminal stretch at 1 to 20 is a signal peptide; it reads MGLSTYVGIFLLCILTLSRC. ATP contacts are provided by residues 36-39, Lys-96, 226-228, 292-299, and 363-366; these read GTTY, GGT, EKAKRTLS, and GSTR. Residues 125 to 279 are nucleotide-binding (NBD); that stretch reads KPYMKVQVGS…KKKEGKDITK (155 aa). Positions 399 to 499 are substrate-binding (SBD); it reads VQAGVISGVE…PRGLPQIEVT (101 aa). Residues 648–651 carry the Prevents secretion from ER motif; sequence KEEL.

This sequence belongs to the heat shock protein 70 family.

It is found in the endoplasmic reticulum lumen. The catalysed reaction is ATP + H2O = ADP + phosphate + H(+). With respect to regulation, the chaperone activity is regulated by ATP-induced allosteric coupling of the nucleotide-binding (NBD) and substrate-binding (SBD) domains. In the ADP-bound and nucleotide-free (apo) states, the two domains have little interaction. In contrast, in the ATP-bound state the two domains are tightly coupled, which results in drastically accelerated kinetics in both binding and release of polypeptide substrates. J domain-containing co-chaperones stimulate the ATPase activity and are required for efficient substrate recognition. Its function is as follows. Endoplasmic reticulum chaperone that plays a key role in protein folding and quality control in the endoplasmic reticulum lumen. Involved in the correct folding of proteins and degradation of misfolded proteins. Acts as a key repressor of the unfolded protein response (UPR). This Echinococcus granulosus (Hydatid tapeworm) protein is Endoplasmic reticulum chaperone BiP.